The following is a 590-amino-acid chain: Negative elongation factor C/D (590 aa).

A disordered region spans residues 16–43; sequence GSAAEWGDEADGGQQEDDSGEGEDDAEV. Acidic residues predominate over residues 21-43; it reads WGDEADGGQQEDDSGEGEDDAEV.

The protein belongs to the NELF-D family. As to quaternary structure, the NELF complex is composed of NELFA, NELFB, NELFCD (isoform NELF-C or isoform NELF-D) and NELFE; NELFA and NELFCD form a stable subcomplex that binds primarily through NELFCD to the N-terminus of NELFB. Binds RNA which may help to stabilize the NELF complex on nucleic acid. In vitro, the NELFA:NELFCD subcomplex binds to ssDNA and ssRNA in a sequence- and structure-dependent manner. Interacts with ARAF. Interacts with PCF11. Interacts with KAT8. Widely expressed. Expressed in heart, brain, lung, placenta, liver, skeletal and cardiac muscle, adrenal, thyroid, kidney and pancreas.

The protein localises to the nucleus. Its function is as follows. Essential component of the NELF complex, a complex that negatively regulates the elongation of transcription by RNA polymerase II. The NELF complex, which acts via an association with the DSIF complex and causes transcriptional pausing, is counteracted by the P-TEFb kinase complex. Functionally, (Microbial infection) The NELF complex is involved in HIV-1 latency possibly involving recruitment of PCF11 to paused RNA polymerase II. The chain is Negative elongation factor C/D (NELFCD) from Homo sapiens (Human).